A 181-amino-acid polypeptide reads, in one-letter code: Translationally-controlled tumor protein homolog (181 aa).

One can recognise a TCTP domain in the interval 1-181; it reads MLIFKDAFTD…VKEALIEEKQ (181 aa).

This sequence belongs to the TCTP family.

It is found in the cytoplasm. Its function is as follows. Involved in calcium binding and microtubule stabilization. This chain is Translationally-controlled tumor protein homolog, found in Brugia malayi (Filarial nematode worm).